A 228-amino-acid chain; its full sequence is uncharacterized protein (228 aa).

The N-terminal stretch at 1–28 (MRKKRVITCVMAASLTLGSLLPAGYASA) is a signal peptide.

This is an uncharacterized protein from Bacillus subtilis (strain 168).